Reading from the N-terminus, the 244-residue chain is 7-cyano-7-deazaguanine synthase (244 aa).

14–24 is an ATP binding site; sequence FSGGQDSATCV. 4 residues coordinate Zn(2+): Cys202, Cys217, Cys220, and Cys223.

This sequence belongs to the QueC family. Zn(2+) is required as a cofactor.

The catalysed reaction is 7-carboxy-7-deazaguanine + NH4(+) + ATP = 7-cyano-7-deazaguanine + ADP + phosphate + H2O + H(+). The protein operates within purine metabolism; 7-cyano-7-deazaguanine biosynthesis. Catalyzes the ATP-dependent conversion of 7-carboxy-7-deazaguanine (CDG) to 7-cyano-7-deazaguanine (preQ(0)). In Burkholderia cenocepacia (strain ATCC BAA-245 / DSM 16553 / LMG 16656 / NCTC 13227 / J2315 / CF5610) (Burkholderia cepacia (strain J2315)), this protein is 7-cyano-7-deazaguanine synthase.